The following is a 186-amino-acid chain: Ribosome-recycling factor (186 aa).

Belongs to the RRF family.

Its subcellular location is the cytoplasm. Responsible for the release of ribosomes from messenger RNA at the termination of protein biosynthesis. May increase the efficiency of translation by recycling ribosomes from one round of translation to another. The polypeptide is Ribosome-recycling factor (Rickettsia bellii (strain OSU 85-389)).